Consider the following 504-residue polypeptide: Maturase K (504 aa).

It belongs to the intron maturase 2 family. MatK subfamily.

It localises to the plastid. The protein localises to the chloroplast. Its function is as follows. Usually encoded in the trnK tRNA gene intron. Probably assists in splicing its own and other chloroplast group II introns. This Cardamine amara (Large bitter-cress) protein is Maturase K.